We begin with the raw amino-acid sequence, 474 residues long: PRAME family member 8 (474 aa).

An LRR 1; degenerate repeat occupies 97–122 (QSKLQVLDLRNVDENFCDIFSGATAS). An LRR 2; degenerate repeat occupies 177–201 (HVCCKELQVFGMPIHSIIEVLNMVE). Residues 202-228 (LDCIQEVEVCCPWELSTLVKFAPYLGQ) form an LRR 3; degenerate repeat. Residues 229–264 (MRNLRKLVLFNIRASACIPPDNKGQFIARFTSQFLK) form an LRR 4; degenerate repeat. LRR repeat units lie at residues 265–290 (LDYFQNLSMHSVSFLEGHLDQLLRCL), 291–322 (QASLEMVVMTDCLLSESDLKHLSWCPSIRQLK), 323–341 (ELDLRGVTLTHFSPEPLTG), 347–374 (VATLQTLDLEDCGIMDSQLSAILPVLSR), and 375–399 (CSQLSTFSFCGNLISMAALENLLRH).

It belongs to the PRAME family.

The polypeptide is PRAME family member 8 (Homo sapiens (Human)).